The sequence spans 553 residues: Membrane protein insertase YidC (553 aa).

A helical transmembrane segment spans residues 3 to 23; that stretch reads IKRTILWVIFSLSVVLLFDNW. The disordered stretch occupies residues 44-64; it reads AAAPGGTPAGDVPKAAAPAAA. 4 helical membrane-spanning segments follow: residues 359–379, 429–449, 467–487, and 507–527; these read LLGNWGWSIVALTVLVKLVFF, LGGCLPIVIQIPVFIALYWVL, LASPDPFYILPILMAVSMFVQ, and PIAFSVMFFFFPAGLVLYWVV.

This sequence belongs to the OXA1/ALB3/YidC family. Type 1 subfamily. As to quaternary structure, interacts with the Sec translocase complex via SecD. Specifically interacts with transmembrane segments of nascent integral membrane proteins during membrane integration.

The protein localises to the cell inner membrane. Its function is as follows. Required for the insertion and/or proper folding and/or complex formation of integral membrane proteins into the membrane. Involved in integration of membrane proteins that insert both dependently and independently of the Sec translocase complex, as well as at least some lipoproteins. Aids folding of multispanning membrane proteins. This chain is Membrane protein insertase YidC, found in Ralstonia nicotianae (strain ATCC BAA-1114 / GMI1000) (Ralstonia solanacearum).